We begin with the raw amino-acid sequence, 93 residues long: Small ribosomal subunit protein bS16 (93 aa).

It belongs to the bacterial ribosomal protein bS16 family.

The protein is Small ribosomal subunit protein bS16 of Dictyoglomus turgidum (strain DSM 6724 / Z-1310).